We begin with the raw amino-acid sequence, 960 residues long: MEAPPAAGVPTECTPAVAGAEVRCPGPTPLRLLEWKVAAGATVRIGSVLAVCETAASAQPAGPAPARAASGGCVRAARTERRLRSERAGVVRELCAQPGQVVAPGALLVRLEGCSHPVVMKGLCAECGQDLTQLQSKNGRQQVPLSTATVSMVHSVPELMVSSEQAEKLGREDQQRLHRNRKLVLMVDLDQTLIHTTEQHCPQMSNKGIFHFQLGRGEPMLHTRLRPHCKDFLEKIAKLYELHVFTFGSRLYAHTIAGFLDPEKKLFSHRILSRDECIDPFSKTGNLRNLFPCGDSMVCIIDDREDVWKFAPNLITVKKYVYFPGTGDVNAPPAARETQARRKVNHSSKGGDALEQALSVRDPEDGRPAPGVEHSNGLGKASRELNGGEAVPGVFPSKADEKEAWPLTRASPASSSSGHEPTEAPELPVSCEWDGRTTPGVQPTQGDAATQDLDFDLSSDSESSESSSRSEGQRAPAPQERTKAAPEHSGPQDTSGGRAAASPLGESGPSIHPHDKGSDLDTQEEGERDSLCGLGNGSVDRKEAETESQNSEQSGVTAGESLDQSVGEEEEEDTDDDDHLIHLEEILVRVHTDYYTKYDRYLNKELEEAPDIRKIVPELKSKVLADVAVIFSGLHPTNFPVEKTREHYHATALGAKVLTQLVLSPDAPDRATHLIAARAGTEKVRQAQECKHLHVVSPDWLWSCLERWDKVEEQLFPLIDDDTRTHRDNSPAVFPDRHSVLPTALFHPTPIHSKAHPGPEVRIYDSNTGKLIRMGPQGSAPAPSSAPLNHGEPSSFRAVQPHQQQMFGEELPESQDGEQPGPARRKRQPSMSEAMPLYTLCKEDLESMDKEVDDILGEGSDDSDIEKKKPEDQDNEQERAPKPRKPRAPGIRREQPVGLPSSGERSTPGMRGPRGHKRKLNEEDAASESSGESSNDDEEGSSSEADEMAAALEAELNDLM.

Residue M1 is modified to N-acetylmethionine. Residues H178 to R341 enclose the FCP1 homology domain. The tract at residues A331 to L580 is disordered. Residues P439–A448 show a composition bias toward polar residues. A compositionally biased stretch (acidic residues) spans L453–S463. Residue S530 is modified to Phosphoserine. The span at E547–V556 shows a compositional bias: polar residues. Residues V566 to D578 are compositionally biased toward acidic residues. The region spanning L619 to L718 is the BRCT domain. Phosphoserine is present on residues S664 and S730. Residue K770 is modified to N6-acetyllysine. Disordered stretches follow at residues K770 to A834 and D854 to M948. S830, S860, and S863 each carry phosphoserine. Over residues D854–D864 the composition is skewed to acidic residues. A compositionally biased stretch (basic and acidic residues) spans I865 to P881. Positions S934 to E947 are enriched in acidic residues.

As to quaternary structure, homodimer. Interacts with GTF2F1. Interacts with WDR77, SNRPB and SNRNP70. In terms of processing, phosphorylated. In the presence of TFIIF, the phosphorylated form has an increased CTD phosphatase activity. The phosphorylation is required for the physical interaction with GTF2F1.

It localises to the nucleus. It is found in the cytoplasm. The protein localises to the cytoskeleton. The protein resides in the microtubule organizing center. Its subcellular location is the centrosome. It localises to the spindle. It is found in the spindle pole. The protein localises to the midbody. It carries out the reaction O-phospho-L-seryl-[protein] + H2O = L-seryl-[protein] + phosphate. The enzyme catalyses O-phospho-L-threonyl-[protein] + H2O = L-threonyl-[protein] + phosphate. Functionally, processively dephosphorylates 'Ser-2' and 'Ser-5' of the heptad repeats YSPTSPS in the C-terminal domain of the largest RNA polymerase II subunit. This promotes the activity of RNA polymerase II. Plays a role in the exit from mitosis by dephosphorylating crucial mitotic substrates (USP44, CDC20 and WEE1) that are required for M-phase-promoting factor (MPF)/CDK1 inactivation. This chain is RNA polymerase II subunit A C-terminal domain phosphatase (Ctdp1), found in Mus musculus (Mouse).